The following is a 242-amino-acid chain: Large ribosomal subunit protein uL1 (242 aa).

The protein belongs to the universal ribosomal protein uL1 family. Part of the 50S ribosomal subunit.

Its function is as follows. Binds directly to 23S rRNA. The L1 stalk is quite mobile in the ribosome, and is involved in E site tRNA release. Functionally, protein L1 is also a translational repressor protein, it controls the translation of the L11 operon by binding to its mRNA. The protein is Large ribosomal subunit protein uL1 of Dictyoglomus thermophilum (strain ATCC 35947 / DSM 3960 / H-6-12).